We begin with the raw amino-acid sequence, 255 residues long: 5'-nucleotidase SurE (255 aa).

A divalent metal cation contacts are provided by Asp8, Asp9, Ser39, and Asn95.

It belongs to the SurE nucleotidase family. A divalent metal cation is required as a cofactor.

It localises to the cytoplasm. It catalyses the reaction a ribonucleoside 5'-phosphate + H2O = a ribonucleoside + phosphate. In terms of biological role, nucleotidase that shows phosphatase activity on nucleoside 5'-monophosphates. This chain is 5'-nucleotidase SurE, found in Herpetosiphon aurantiacus (strain ATCC 23779 / DSM 785 / 114-95).